Reading from the N-terminus, the 158-residue chain is NADH-quinone oxidoreductase subunit B (158 aa).

[4Fe-4S] cluster is bound by residues cysteine 36, cysteine 37, cysteine 101, and cysteine 131.

Belongs to the complex I 20 kDa subunit family. In terms of assembly, NDH-1 is composed of 14 different subunits. Subunits NuoB, C, D, E, F, and G constitute the peripheral sector of the complex. It depends on [4Fe-4S] cluster as a cofactor.

Its subcellular location is the cell inner membrane. It carries out the reaction a quinone + NADH + 5 H(+)(in) = a quinol + NAD(+) + 4 H(+)(out). Its function is as follows. NDH-1 shuttles electrons from NADH, via FMN and iron-sulfur (Fe-S) centers, to quinones in the respiratory chain. The immediate electron acceptor for the enzyme in this species is believed to be ubiquinone. Couples the redox reaction to proton translocation (for every two electrons transferred, four hydrogen ions are translocated across the cytoplasmic membrane), and thus conserves the redox energy in a proton gradient. The sequence is that of NADH-quinone oxidoreductase subunit B from Francisella tularensis subsp. tularensis (strain FSC 198).